The sequence spans 140 residues: Chromatin accessibility complex 16kD protein (140 aa).

A disordered region spans residues 111–140; that stretch reads LNRSAGSDDDDDDDDDDDEEESESESESDE. Residues 117–140 are compositionally biased toward acidic residues; that stretch reads SDDDDDDDDDDDEEESESESESDE.

Component of the chromatin accessibility complex (CHRAC), composed of Chrac-14, Chrac-16, Acf and Iswi. Forms a heterodimer with Chrac-14. The Chrac-14/Chrac-16 heterodimer interacts with Acf (via N-terminus). Stabilizes the interaction between Chrac-14 and Iswi.

It is found in the nucleus. Its function is as follows. Histone-like protein which promotes nucleosome sliding of ATP-dependent nucleosome remodeling complexes. Part of the chromatin-accessibility complex (CHRAC) which uses energy/ATP to increase the general accessibility of DNA in chromatin. As a heterodimer with Chrac-14, binds DNA and facilitates nucleosome sliding by Acf. As part of the CHRAC complex, required for oogenesis. This is Chromatin accessibility complex 16kD protein from Drosophila melanogaster (Fruit fly).